A 254-amino-acid polypeptide reads, in one-letter code: 5'/3'-nucleotidase SurE (254 aa).

A divalent metal cation-binding residues include aspartate 8, aspartate 9, serine 39, and asparagine 92.

Belongs to the SurE nucleotidase family. A divalent metal cation serves as cofactor.

It is found in the cytoplasm. It carries out the reaction a ribonucleoside 5'-phosphate + H2O = a ribonucleoside + phosphate. The enzyme catalyses a ribonucleoside 3'-phosphate + H2O = a ribonucleoside + phosphate. The catalysed reaction is [phosphate](n) + H2O = [phosphate](n-1) + phosphate + H(+). In terms of biological role, nucleotidase with a broad substrate specificity as it can dephosphorylate various ribo- and deoxyribonucleoside 5'-monophosphates and ribonucleoside 3'-monophosphates with highest affinity to 3'-AMP. Also hydrolyzes polyphosphate (exopolyphosphatase activity) with the preference for short-chain-length substrates (P20-25). Might be involved in the regulation of dNTP and NTP pools, and in the turnover of 3'-mononucleotides produced by numerous intracellular RNases (T1, T2, and F) during the degradation of various RNAs. In Edwardsiella ictaluri (strain 93-146), this protein is 5'/3'-nucleotidase SurE.